The chain runs to 1105 residues: Carbamoyl phosphate synthase large chain (1105 aa).

Residues 1–402 form a carboxyphosphate synthetic domain region; it reads MPKRDDIEKV…ALGKAVRSLE (402 aa). Residues Arg-129, Arg-169, Gly-175, Gly-176, Lys-208, Val-210, Glu-215, Gly-241, Ile-242, His-243, Gln-285, and Glu-299 each coordinate ATP. The 196-residue stretch at 133-328 folds into the ATP-grasp 1 domain; the sequence is KTAMKNCGLE…IAKISALLAV (196 aa). Gln-285, Glu-299, and Asn-301 together coordinate Mg(2+). 3 residues coordinate Mn(2+): Gln-285, Glu-299, and Asn-301. An oligomerization domain region spans residues 403–542; it reads LDIAPKLDLR…STYNGMENET (140 aa). Residues 543 to 945 are carbamoyl phosphate synthetic domain; the sequence is IPSKRRKIMV…AFAKAQLSAD (403 aa). The ATP-grasp 2 domain maps to 667–858; the sequence is AKFLKQSGLS…VAKIAAKTII (192 aa). ATP contacts are provided by Arg-703, Lys-742, Leu-744, Glu-749, Gly-774, Ile-775, His-776, Ser-777, Gln-817, and Glu-829. Positions 817, 829, and 831 each coordinate Mg(2+). The Mn(2+) site is built by Gln-817, Glu-829, and Asn-831. The region spanning 940–1101 is the MGS-like domain; the sequence is AQLSADGIST…QDIFYAQQNT (162 aa). The allosteric domain stretch occupies residues 946–1105; that stretch reads GISTKSLLVT…YAQQNTLLKK (160 aa).

It belongs to the CarB family. Composed of two chains; the small (or glutamine) chain promotes the hydrolysis of glutamine to ammonia, which is used by the large (or ammonia) chain to synthesize carbamoyl phosphate. Tetramer of heterodimers (alpha,beta)4. Requires Mg(2+) as cofactor. It depends on Mn(2+) as a cofactor.

The enzyme catalyses hydrogencarbonate + L-glutamine + 2 ATP + H2O = carbamoyl phosphate + L-glutamate + 2 ADP + phosphate + 2 H(+). It catalyses the reaction hydrogencarbonate + NH4(+) + 2 ATP = carbamoyl phosphate + 2 ADP + phosphate + 2 H(+). It functions in the pathway amino-acid biosynthesis; L-arginine biosynthesis; carbamoyl phosphate from bicarbonate: step 1/1. The protein operates within pyrimidine metabolism; UMP biosynthesis via de novo pathway; (S)-dihydroorotate from bicarbonate: step 1/3. Functionally, large subunit of the glutamine-dependent carbamoyl phosphate synthetase (CPSase). CPSase catalyzes the formation of carbamoyl phosphate from the ammonia moiety of glutamine, carbonate, and phosphate donated by ATP, constituting the first step of 2 biosynthetic pathways, one leading to arginine and/or urea and the other to pyrimidine nucleotides. The large subunit (synthetase) binds the substrates ammonia (free or transferred from glutamine from the small subunit), hydrogencarbonate and ATP and carries out an ATP-coupled ligase reaction, activating hydrogencarbonate by forming carboxy phosphate which reacts with ammonia to form carbamoyl phosphate. This chain is Carbamoyl phosphate synthase large chain, found in Pseudothermotoga lettingae (strain ATCC BAA-301 / DSM 14385 / NBRC 107922 / TMO) (Thermotoga lettingae).